The primary structure comprises 304 residues: Xylanase inhibitor protein 1 (304 aa).

The N-terminal stretch at 1 to 30 (MAPLAARRPACLLALLSVAAALFLTPTALA) is a signal peptide. Residues 36 to 304 (GQVTVFWGRN…NYSSLIKYYA (269 aa)) form the GH18 domain. Cys55 and Cys96 are oxidised to a cystine. Asn119 carries N-linked (GlcNAc...) asparagine glycosylation. Catalysis depends on Glu158, which acts as the Proton donor. Residues 178-184 (IRGGPGK) are interaction with fungal GH11 xylanase. An intrachain disulfide couples Cys194 to Cys225. The interaction with fungal GH10 xylanase stretch occupies residues 262–275 (HPKNVYYGVAPVAQ). The N-linked (GlcNAc...) asparagine glycan is linked to Asn295.

It belongs to the glycosyl hydrolase 18 family. Xylanase inhibitor subfamily. As to quaternary structure, binds to fungal GH10 and GH11 xylanases. Also forms a ternary complex with barley alpha-amylase 1 (AMY1) and insoluble starch.

It is found in the secreted. In terms of biological role, fungal xylanase inhibitor. Possesses competitive inhibiting activity against fungal endo-1,4-beta-D-xylanases belonging to glycoside hydrolase family 10 (GH10) and family 11 (GH11). Possesses also inhibitory activity towards barley alpha-amylases. Binding to xylanases or amylases is necessary for inhibition activity. May function in plant defense against secreted fungal pathogen xylanases. Is similar to class III chitinases, but does not exhibit chitinase activity. The polypeptide is Xylanase inhibitor protein 1 (Triticum aestivum (Wheat)).